Reading from the N-terminus, the 117-residue chain is Large ribosomal subunit protein uL18 (117 aa).

This sequence belongs to the universal ribosomal protein uL18 family. As to quaternary structure, part of the 50S ribosomal subunit; part of the 5S rRNA/L5/L18/L25 subcomplex. Contacts the 5S and 23S rRNAs.

This is one of the proteins that bind and probably mediate the attachment of the 5S RNA into the large ribosomal subunit, where it forms part of the central protuberance. The polypeptide is Large ribosomal subunit protein uL18 (Vibrio proteolyticus (Aeromonas proteolytica)).